A 141-amino-acid chain; its full sequence is U1 small nuclear ribonucleoprotein C (141 aa).

Residues 4 to 36 (YYCEYCDKYLTHDSPSVRKSHTIGKVHQQAVTL) form a Matrin-type zinc finger. The interval 69-141 (LLPPNMVPGQ…SNSPPSNNDQ (73 aa)) is disordered. Positions 83 to 97 (MMPPGQFPFPPPPGQ) are enriched in pro residues. 2 stretches are compositionally biased toward low complexity: residues 100–110 (GGMPPHQQQPM) and 124–141 (QQSA…NNDQ).

The protein belongs to the U1 small nuclear ribonucleoprotein C family. As to quaternary structure, component of the U1 snRNP. The U1 snRNP is composed of the U1 snRNA and the 7 core Sm proteins SNRPB, SNRPD1, SNRPD2, SNRPD3, SNRPE, SNRPF and SNRPG that assemble in a heptameric protein ring on the Sm site of the small nuclear RNA to form the core snRNP, and at least 3 U1 snRNP-specific proteins SNRNP70/U1-70K, SNRPA/U1-A and SNRPC/U1-C. SNRPC/U1-C interacts with U1 snRNA and the 5' splice-site region of the pre-mRNA.

The protein localises to the nucleus. Component of the spliceosomal U1 snRNP, which is essential for recognition of the pre-mRNA 5' splice-site and the subsequent assembly of the spliceosome. SNRPC/U1-C is directly involved in initial 5' splice-site recognition for both constitutive and regulated alternative splicing. The interaction with the 5' splice-site seems to precede base-pairing between the pre-mRNA and the U1 snRNA. Stimulates commitment or early (E) complex formation by stabilizing the base pairing of the 5' end of the U1 snRNA and the 5' splice-site region. This is U1 small nuclear ribonucleoprotein C from Heterostelium pallidum (strain ATCC 26659 / Pp 5 / PN500) (Cellular slime mold).